The primary structure comprises 294 residues: Sarcotoxin II-2 (294 aa).

An N-terminal signal peptide occupies residues 1 to 22 (MKSFVFFAACFAIVALNSLAHA). Positions 23–24 (YP) are cleaved as a propeptide — removed by a dipeptidylpeptidase. Pyrrolidone carboxylic acid is present on Q25. Position 293 is an arginine amide (R293).

It belongs to the attacin/sarcotoxin-2 family. As to expression, synthesized by the fat body and is eventually secreted into the hemolymph.

It is found in the secreted. Its function is as follows. Sarcotoxin II is an antibacterial protein which plays a role in the inflammatory response of this insect. The main effect of sarcotoxin II on E.coli may be the inhibition of cell wall synthesis, including septum formation. This chain is Sarcotoxin II-2, found in Sarcophaga peregrina (Flesh fly).